We begin with the raw amino-acid sequence, 74 residues long: Cytochrome c oxidase subunit 2 (74 aa).

Residues 1–14 (MAHPMQLGFQDAAS) lie on the Mitochondrial intermembrane side of the membrane. The chain crosses the membrane as a helical span at residues 15–45 (PVMEELLHFHDHALMIVFLISTAVLYIIVVT). The Mitochondrial matrix portion of the chain corresponds to 46-74 (VTTKLTDKYVLDAQEIEMVWTIMPAVVLI).

Belongs to the cytochrome c oxidase subunit 2 family. In terms of assembly, component of the cytochrome c oxidase (complex IV, CIV), a multisubunit enzyme composed of 14 subunits. The complex is composed of a catalytic core of 3 subunits MT-CO1, MT-CO2 and MT-CO3, encoded in the mitochondrial DNA, and 11 supernumerary subunits COX4I, COX5A, COX5B, COX6A, COX6B, COX6C, COX7A, COX7B, COX7C, COX8 and NDUFA4, which are encoded in the nuclear genome. The complex exists as a monomer or a dimer and forms supercomplexes (SCs) in the inner mitochondrial membrane with NADH-ubiquinone oxidoreductase (complex I, CI) and ubiquinol-cytochrome c oxidoreductase (cytochrome b-c1 complex, complex III, CIII), resulting in different assemblies (supercomplex SCI(1)III(2)IV(1) and megacomplex MCI(2)III(2)IV(2)). Found in a complex with TMEM177, COA6, COX18, COX20, SCO1 and SCO2. Interacts with TMEM177 in a COX20-dependent manner. Interacts with COX20. Interacts with COX16. It depends on Cu cation as a cofactor.

The protein localises to the mitochondrion inner membrane. It carries out the reaction 4 Fe(II)-[cytochrome c] + O2 + 8 H(+)(in) = 4 Fe(III)-[cytochrome c] + 2 H2O + 4 H(+)(out). Component of the cytochrome c oxidase, the last enzyme in the mitochondrial electron transport chain which drives oxidative phosphorylation. The respiratory chain contains 3 multisubunit complexes succinate dehydrogenase (complex II, CII), ubiquinol-cytochrome c oxidoreductase (cytochrome b-c1 complex, complex III, CIII) and cytochrome c oxidase (complex IV, CIV), that cooperate to transfer electrons derived from NADH and succinate to molecular oxygen, creating an electrochemical gradient over the inner membrane that drives transmembrane transport and the ATP synthase. Cytochrome c oxidase is the component of the respiratory chain that catalyzes the reduction of oxygen to water. Electrons originating from reduced cytochrome c in the intermembrane space (IMS) are transferred via the dinuclear copper A center (CU(A)) of subunit 2 and heme A of subunit 1 to the active site in subunit 1, a binuclear center (BNC) formed by heme A3 and copper B (CU(B)). The BNC reduces molecular oxygen to 2 water molecules using 4 electrons from cytochrome c in the IMS and 4 protons from the mitochondrial matrix. The protein is Cytochrome c oxidase subunit 2 (mt-co2) of Amia calva (Bowfin).